The primary structure comprises 751 residues: Photosystem I P700 chlorophyll a apoprotein A1 (751 aa).

The next 8 membrane-spanning stretches (helical) occupy residues 73–96 (VFSA…FHGA), 159–182 (LYTT…FHYH), 198–222 (LNHH…HVSL), 294–312 (TAHH…GHMY), 349–372 (WHAQ…HHMY), 388–414 (LSLF…IFMV), 436–458 (AIIS…LYIH), and 533–551 (FMVH…LILL). [4Fe-4S] cluster-binding residues include C575 and C584. Transmembrane regions (helical) follow at residues 591 to 612 (HVFL…HFSW) and 665 to 687 (LSAY…LDIF). Position 676 (H676) interacts with chlorophyll a'. Chlorophyll a is bound by residues M683 and Y692. W693 is a binding site for phylloquinone. The chain crosses the membrane as a helical span at residues 725–745 (AVGVAHYLLGGIATTWSFFLA).

Belongs to the PsaA/PsaB family. The PsaA/B heterodimer binds the P700 chlorophyll special pair and subsequent electron acceptors. PSI consists of a core antenna complex that captures photons, and an electron transfer chain that converts photonic excitation into a charge separation. The eukaryotic PSI reaction center is composed of at least 11 subunits. Requires P700 is a chlorophyll a/chlorophyll a' dimer, A0 is one or more chlorophyll a, A1 is one or both phylloquinones and FX is a shared 4Fe-4S iron-sulfur center. as cofactor.

The protein resides in the plastid. It is found in the chloroplast thylakoid membrane. The enzyme catalyses reduced [plastocyanin] + hnu + oxidized [2Fe-2S]-[ferredoxin] = oxidized [plastocyanin] + reduced [2Fe-2S]-[ferredoxin]. Its function is as follows. PsaA and PsaB bind P700, the primary electron donor of photosystem I (PSI), as well as the electron acceptors A0, A1 and FX. PSI is a plastocyanin/cytochrome c6-ferredoxin oxidoreductase, converting photonic excitation into a charge separation, which transfers an electron from the donor P700 chlorophyll pair to the spectroscopically characterized acceptors A0, A1, FX, FA and FB in turn. Oxidized P700 is reduced on the lumenal side of the thylakoid membrane by plastocyanin or cytochrome c6. The protein is Photosystem I P700 chlorophyll a apoprotein A1 of Stigeoclonium helveticum (Green alga).